Here is an 85-residue protein sequence, read N- to C-terminus: MGSFSIWHWLIVLLIIMMVFGTKKLRNIGSDLGSAVKGFKEGMREGSEDKPAGSQQGQQAAGQPPRELHDSTTIDVEARDKSKQG.

The helical transmembrane segment at 1–21 (MGSFSIWHWLIVLLIIMMVFG) threads the bilayer. A compositionally biased stretch (basic and acidic residues) spans 39-51 (FKEGMREGSEDKP). The tract at residues 39 to 85 (FKEGMREGSEDKPAGSQQGQQAAGQPPRELHDSTTIDVEARDKSKQG) is disordered. Over residues 52–65 (AGSQQGQQAAGQPP) the composition is skewed to low complexity. Over residues 66-85 (RELHDSTTIDVEARDKSKQG) the composition is skewed to basic and acidic residues.

Belongs to the TatA/E family. The Tat system comprises two distinct complexes: a TatABC complex, containing multiple copies of TatA, TatB and TatC subunits, and a separate TatA complex, containing only TatA subunits. Substrates initially bind to the TatABC complex, which probably triggers association of the separate TatA complex to form the active translocon.

The protein resides in the cell inner membrane. Part of the twin-arginine translocation (Tat) system that transports large folded proteins containing a characteristic twin-arginine motif in their signal peptide across membranes. TatA could form the protein-conducting channel of the Tat system. The sequence is that of Sec-independent protein translocase protein TatA from Ralstonia nicotianae (strain ATCC BAA-1114 / GMI1000) (Ralstonia solanacearum).